The following is a 488-amino-acid chain: NADH-ubiquinone oxidoreductase chain 4 (488 aa).

14 consecutive transmembrane segments (helical) span residues 1–21 (MFLL…IEGN), 34–54 (SIAL…FILF), 79–99 (VDGL…IAIL), 110–130 (VLSF…VFLV), 134–154 (LLFY…IGLF), 164–184 (FYLF…IVAM), 207–227 (LFLF…SFLN), 238–258 (PLSG…YGIF), 272–292 (YTYI…FSTL), 301–321 (IAYS…SNTI), 328–348 (IALG…AGGI), 367–387 (VMPI…GTPL), 407–427 (LLGV…IFMY), and 452–472 (FIML…PAPI).

It belongs to the complex I subunit 4 family.

It is found in the mitochondrion membrane. The catalysed reaction is a ubiquinone + NADH + 5 H(+)(in) = a ubiquinol + NAD(+) + 4 H(+)(out). Functionally, core subunit of the mitochondrial membrane respiratory chain NADH dehydrogenase (Complex I) that is believed to belong to the minimal assembly required for catalysis. Complex I functions in the transfer of electrons from NADH to the respiratory chain. The immediate electron acceptor for the enzyme is believed to be ubiquinone. The sequence is that of NADH-ubiquinone oxidoreductase chain 4 (ND4) from Aspergillus amstelodami.